We begin with the raw amino-acid sequence, 209 residues long: MKKIIRVGIGGPVGSGKTAIIEVITPRLMQRGIKPLIITNDIVTTEDAKQVKRTLKGILDEEKIVGVETGACPHTAVREDPSMNIAAVEELEARFPDSDVIMIESGGDNLTLTFSPALADFYIYVIDVAEGEKIPRKNGPGLVQADILVINKTDLAPYVGADLSVMESDTKVVRGDRPYVMTNCKTGEGVEELVDMIMRDFLFTHSEIK.

11–18 (GPVGSGKT) provides a ligand contact to GTP.

This sequence belongs to the SIMIBI class G3E GTPase family. UreG subfamily. As to quaternary structure, homodimer. UreD, UreF and UreG form a complex that acts as a GTP-hydrolysis-dependent molecular chaperone, activating the urease apoprotein by helping to assemble the nickel containing metallocenter of UreC. The UreE protein probably delivers the nickel.

It localises to the cytoplasm. In terms of biological role, facilitates the functional incorporation of the urease nickel metallocenter. This process requires GTP hydrolysis, probably effectuated by UreG. This is Urease accessory protein UreG from Edwardsiella ictaluri (strain 93-146).